A 767-amino-acid polypeptide reads, in one-letter code: Phosphoribosylformylglycinamidine synthase subunit PurL (767 aa).

The active site involves His-65. ATP contacts are provided by Tyr-68 and Lys-112. Position 114 (Glu-114) interacts with Mg(2+). Residues 115-118 (SHNH) and Arg-137 each bind substrate. His-116 functions as the Proton acceptor in the catalytic mechanism. Asp-138 is a Mg(2+) binding site. Gln-262 lines the substrate pocket. Asp-290 is a Mg(2+) binding site. 334–336 (ESQ) contributes to the substrate binding site. The ATP site is built by Asp-522 and Gly-559. Asn-560 is a Mg(2+) binding site. Ser-562 provides a ligand contact to substrate.

This sequence belongs to the FGAMS family. Monomer. Part of the FGAM synthase complex composed of 1 PurL, 1 PurQ and 2 PurS subunits.

Its subcellular location is the cytoplasm. It catalyses the reaction N(2)-formyl-N(1)-(5-phospho-beta-D-ribosyl)glycinamide + L-glutamine + ATP + H2O = 2-formamido-N(1)-(5-O-phospho-beta-D-ribosyl)acetamidine + L-glutamate + ADP + phosphate + H(+). Its pathway is purine metabolism; IMP biosynthesis via de novo pathway; 5-amino-1-(5-phospho-D-ribosyl)imidazole from N(2)-formyl-N(1)-(5-phospho-D-ribosyl)glycinamide: step 1/2. Its function is as follows. Part of the phosphoribosylformylglycinamidine synthase complex involved in the purines biosynthetic pathway. Catalyzes the ATP-dependent conversion of formylglycinamide ribonucleotide (FGAR) and glutamine to yield formylglycinamidine ribonucleotide (FGAM) and glutamate. The FGAM synthase complex is composed of three subunits. PurQ produces an ammonia molecule by converting glutamine to glutamate. PurL transfers the ammonia molecule to FGAR to form FGAM in an ATP-dependent manner. PurS interacts with PurQ and PurL and is thought to assist in the transfer of the ammonia molecule from PurQ to PurL. In Renibacterium salmoninarum (strain ATCC 33209 / DSM 20767 / JCM 11484 / NBRC 15589 / NCIMB 2235), this protein is Phosphoribosylformylglycinamidine synthase subunit PurL.